The chain runs to 327 residues: DNA-directed RNA polymerase subunit alpha (327 aa).

Residues 1–233 (MVREKVKVST…NLFIPFLHVE (233 aa)) are alpha N-terminal domain (alpha-NTD). Positions 265–327 (KELAFQYIFI…KKILDILEKK (63 aa)) are alpha C-terminal domain (alpha-CTD).

The protein belongs to the RNA polymerase alpha chain family. As to quaternary structure, in plastids the minimal PEP RNA polymerase catalytic core is composed of four subunits: alpha, beta, beta', and beta''. When a (nuclear-encoded) sigma factor is associated with the core the holoenzyme is formed, which can initiate transcription.

The protein localises to the plastid. Its subcellular location is the chloroplast. The enzyme catalyses RNA(n) + a ribonucleoside 5'-triphosphate = RNA(n+1) + diphosphate. Its function is as follows. DNA-dependent RNA polymerase catalyzes the transcription of DNA into RNA using the four ribonucleoside triphosphates as substrates. The polypeptide is DNA-directed RNA polymerase subunit alpha (Olimarabidopsis pumila (Dwarf rocket)).